A 142-amino-acid chain; its full sequence is Galactose-6-phosphate isomerase subunit LacA (142 aa).

Belongs to the LacAB/RpiB family. In terms of assembly, heteromultimeric protein consisting of LacA and LacB.

It catalyses the reaction aldehydo-D-galactose 6-phosphate = keto-D-tagatose 6-phosphate. The protein operates within carbohydrate metabolism; D-galactose 6-phosphate degradation; D-tagatose 6-phosphate from D-galactose 6-phosphate: step 1/1. In Streptococcus mutans serotype c (strain ATCC 700610 / UA159), this protein is Galactose-6-phosphate isomerase subunit LacA.